The sequence spans 495 residues: Probable cytosol aminopeptidase (495 aa).

Mn(2+) contacts are provided by K266 and D271. The active site involves K278. 3 residues coordinate Mn(2+): D289, D348, and E350. R352 is an active-site residue.

Belongs to the peptidase M17 family. Mn(2+) is required as a cofactor.

It localises to the cytoplasm. It catalyses the reaction Release of an N-terminal amino acid, Xaa-|-Yaa-, in which Xaa is preferably Leu, but may be other amino acids including Pro although not Arg or Lys, and Yaa may be Pro. Amino acid amides and methyl esters are also readily hydrolyzed, but rates on arylamides are exceedingly low.. The catalysed reaction is Release of an N-terminal amino acid, preferentially leucine, but not glutamic or aspartic acids.. In terms of biological role, presumably involved in the processing and regular turnover of intracellular proteins. Catalyzes the removal of unsubstituted N-terminal amino acids from various peptides. This chain is Probable cytosol aminopeptidase, found in Pseudomonas paraeruginosa (strain DSM 24068 / PA7) (Pseudomonas aeruginosa (strain PA7)).